Consider the following 253-residue polypeptide: UPF0758 protein Bxeno_A3578 (253 aa).

The MPN domain maps to 131–253 (LINSPEAVEN…VYSFARAGWP (123 aa)). 3 residues coordinate Zn(2+): histidine 202, histidine 204, and aspartate 215. Residues 202-215 (HNHPSGAVQPSASD) carry the JAMM motif motif.

The protein belongs to the UPF0758 family.

The sequence is that of UPF0758 protein Bxeno_A3578 from Paraburkholderia xenovorans (strain LB400).